Reading from the N-terminus, the 543-residue chain is Lipoyl synthase, apicoplast (543 aa).

The N-terminal stretch at 1 to 63 is a signal peptide; it reads MAYFFDFPTD…LFSLLSASQS (63 aa). Positions 252, 257, 263, 278, 282, 285, and 493 each coordinate [4Fe-4S] cluster. In terms of domain architecture, Radical SAM core spans 264–482; the sequence is WNGGTATLIL…QDIAEEMGFK (219 aa).

Belongs to the radical SAM superfamily. Lipoyl synthase family. [4Fe-4S] cluster serves as cofactor.

The protein localises to the plastid. The protein resides in the apicoplast. The enzyme catalyses [[Fe-S] cluster scaffold protein carrying a second [4Fe-4S](2+) cluster] + N(6)-octanoyl-L-lysyl-[protein] + 2 oxidized [2Fe-2S]-[ferredoxin] + 2 S-adenosyl-L-methionine + 4 H(+) = [[Fe-S] cluster scaffold protein] + N(6)-[(R)-dihydrolipoyl]-L-lysyl-[protein] + 4 Fe(3+) + 2 hydrogen sulfide + 2 5'-deoxyadenosine + 2 L-methionine + 2 reduced [2Fe-2S]-[ferredoxin]. Its pathway is protein modification; protein lipoylation via endogenous pathway; protein N(6)-(lipoyl)lysine from octanoyl-[acyl-carrier-protein]: step 2/2. Functionally, catalyzes the radical-mediated insertion of two sulfur atoms into the C-6 and C-8 positions of the octanoyl moiety bound to the lipoyl domains of lipoate-dependent enzymes, thereby converting the octanoylated domains into lipoylated derivatives. The protein is Lipoyl synthase, apicoplast of Toxoplasma gondii.